We begin with the raw amino-acid sequence, 355 residues long: 3-dehydroquinate synthase (355 aa).

NAD(+) contacts are provided by residues 71–76 (EGEASK), 105–109 (GVVGD), 129–130 (TS), Lys142, Lys151, and 169–172 (TLNT). 3 residues coordinate Zn(2+): Glu184, His246, and His263.

Belongs to the sugar phosphate cyclases superfamily. Dehydroquinate synthase family. It depends on NAD(+) as a cofactor. Co(2+) serves as cofactor. Requires Zn(2+) as cofactor.

It is found in the cytoplasm. It catalyses the reaction 7-phospho-2-dehydro-3-deoxy-D-arabino-heptonate = 3-dehydroquinate + phosphate. It functions in the pathway metabolic intermediate biosynthesis; chorismate biosynthesis; chorismate from D-erythrose 4-phosphate and phosphoenolpyruvate: step 2/7. Catalyzes the conversion of 3-deoxy-D-arabino-heptulosonate 7-phosphate (DAHP) to dehydroquinate (DHQ). The chain is 3-dehydroquinate synthase from Streptococcus mutans serotype c (strain ATCC 700610 / UA159).